A 476-amino-acid chain; its full sequence is Glycogen synthase (476 aa).

Lysine 15 provides a ligand contact to ADP-alpha-D-glucose.

The protein belongs to the glycosyltransferase 1 family. Bacterial/plant glycogen synthase subfamily.

The enzyme catalyses [(1-&gt;4)-alpha-D-glucosyl](n) + ADP-alpha-D-glucose = [(1-&gt;4)-alpha-D-glucosyl](n+1) + ADP + H(+). The protein operates within glycan biosynthesis; glycogen biosynthesis. Synthesizes alpha-1,4-glucan chains using ADP-glucose. The sequence is that of Glycogen synthase from Haemophilus influenzae (strain PittEE).